The chain runs to 333 residues: DNA-directed RNA polymerase subunit alpha (333 aa).

The interval 1-234 (MQSSVNEFLT…QQLAAFVDLK (234 aa)) is alpha N-terminal domain (alpha-NTD). Positions 248–333 (IDPILLRPVD…SLKKDDKATA (86 aa)) are alpha C-terminal domain (alpha-CTD).

This sequence belongs to the RNA polymerase alpha chain family. As to quaternary structure, homodimer. The RNAP catalytic core consists of 2 alpha, 1 beta, 1 beta' and 1 omega subunit. When a sigma factor is associated with the core the holoenzyme is formed, which can initiate transcription.

The catalysed reaction is RNA(n) + a ribonucleoside 5'-triphosphate = RNA(n+1) + diphosphate. Functionally, DNA-dependent RNA polymerase catalyzes the transcription of DNA into RNA using the four ribonucleoside triphosphates as substrates. This Pseudomonas putida (Arthrobacter siderocapsulatus) protein is DNA-directed RNA polymerase subunit alpha.